The following is a 180-amino-acid chain: Ribosome maturation factor RimM (180 aa).

The PRC barrel domain maps to 103–176 (GDIWWDRDLV…RIVVDPPPGL (74 aa)).

It belongs to the RimM family. In terms of assembly, binds ribosomal protein uS19.

The protein localises to the cytoplasm. In terms of biological role, an accessory protein needed during the final step in the assembly of 30S ribosomal subunit, possibly for assembly of the head region. Essential for efficient processing of 16S rRNA. May be needed both before and after RbfA during the maturation of 16S rRNA. It has affinity for free ribosomal 30S subunits but not for 70S ribosomes. In Frankia alni (strain DSM 45986 / CECT 9034 / ACN14a), this protein is Ribosome maturation factor RimM.